Consider the following 70-residue polypeptide: Sec-independent protein translocase protein TatA (70 aa).

The helical transmembrane segment at methionine 1–threonine 21 threads the bilayer. The interval methionine 42–valine 70 is disordered. Residues leucine 57–valine 70 are compositionally biased toward basic and acidic residues.

The protein belongs to the TatA/E family. In terms of assembly, the Tat system comprises two distinct complexes: a TatABC complex, containing multiple copies of TatA, TatB and TatC subunits, and a separate TatA complex, containing only TatA subunits. Substrates initially bind to the TatABC complex, which probably triggers association of the separate TatA complex to form the active translocon.

It is found in the cell inner membrane. Functionally, part of the twin-arginine translocation (Tat) system that transports large folded proteins containing a characteristic twin-arginine motif in their signal peptide across membranes. TatA could form the protein-conducting channel of the Tat system. The chain is Sec-independent protein translocase protein TatA from Methylococcus capsulatus (strain ATCC 33009 / NCIMB 11132 / Bath).